A 449-amino-acid polypeptide reads, in one-letter code: MKPEFLESAEFYNRRYHNFSSSVIVPMALLLVFLLGFATVAEKEMSLSTRATVEPSRILANIQSTSNNRILVNHLEENKLVKKGDLLVQYQEGAEGVQAESYASQLDMLKDQKKQLEYLQKSLQEGENHFPEEDKFGYQATFRDYISQAGSLRASTSQQNETIASQNAAASQTQAEIGNLISQTEAKIRDYQTAKSAIETGTSLAGQNLAYSLYQSYKSQGEENPQTKVQAVAQVEAQISQLESSLATYRVQYAGSGTQQAYASGLSSQLESLKSQHLAKVGQELSLLAQKILEAESGKKVQGNLLDKGKITASEDGVLHLNPETSDSSMVAEGTLLAQLYPSLEREGKAKLTAYLSSKDVARIKVGDSVRYTTTHDAGNQLFLDSTITSIDATATKTEKGNFFKIEAETNLTSEQAEKLRYGVEGRLQMITGKKSYLRYYLDQFLNKE.

Residues 1 to 20 (MKPEFLESAEFYNRRYHNFS) lie on the Cytoplasmic side of the membrane. A helical transmembrane segment spans residues 21-41 (SSVIVPMALLLVFLLGFATVA). The Extracellular segment spans residues 42-449 (EKEMSLSTRA…YYLDQFLNKE (408 aa)).

This sequence belongs to the membrane fusion protein (MFP) (TC 8.A.1) family.

The protein localises to the cell membrane. Functionally, required for induction of competence. This chain is Transport protein ComB (comB), found in Streptococcus pneumoniae (strain ATCC BAA-255 / R6).